A 305-amino-acid polypeptide reads, in one-letter code: Lipoyl synthase (305 aa).

Positions 41, 46, 52, 68, 72, 75, and 281 each coordinate [4Fe-4S] cluster. Residues 54–270 (GARRTATFMI…RKVAMDKGFK (217 aa)) form the Radical SAM core domain. Positions 283–298 (HADEQVNEAAKEKQRQ) are enriched in basic and acidic residues. The interval 283–305 (HADEQVNEAAKEKQRQGEAQLNS) is disordered.

It belongs to the radical SAM superfamily. Lipoyl synthase family. [4Fe-4S] cluster serves as cofactor.

It localises to the cytoplasm. It catalyses the reaction [[Fe-S] cluster scaffold protein carrying a second [4Fe-4S](2+) cluster] + N(6)-octanoyl-L-lysyl-[protein] + 2 oxidized [2Fe-2S]-[ferredoxin] + 2 S-adenosyl-L-methionine + 4 H(+) = [[Fe-S] cluster scaffold protein] + N(6)-[(R)-dihydrolipoyl]-L-lysyl-[protein] + 4 Fe(3+) + 2 hydrogen sulfide + 2 5'-deoxyadenosine + 2 L-methionine + 2 reduced [2Fe-2S]-[ferredoxin]. Its pathway is protein modification; protein lipoylation via endogenous pathway; protein N(6)-(lipoyl)lysine from octanoyl-[acyl-carrier-protein]. Catalyzes the radical-mediated insertion of two sulfur atoms into the C-6 and C-8 positions of the octanoyl moiety bound to the lipoyl domains of lipoate-dependent enzymes, thereby converting the octanoylated domains into lipoylated derivatives. This chain is Lipoyl synthase, found in Staphylococcus aureus (strain Mu3 / ATCC 700698).